A 338-amino-acid chain; its full sequence is 3-phosphoshikimate 1-carboxyvinyltransferase 2 (338 aa).

Arg25 contributes to the phosphoenolpyruvate binding site. Positions 72, 73, 74, 100, 225, and 252 each coordinate 3-phosphoshikimate. Gln74 lines the phosphoenolpyruvate pocket. The active-site Proton acceptor is the Asp225. Residues Arg256, Arg298, and Lys323 each contribute to the phosphoenolpyruvate site.

This sequence belongs to the EPSP synthase family.

The protein resides in the plastid. It is found in the chloroplast. It catalyses the reaction 3-phosphoshikimate + phosphoenolpyruvate = 5-O-(1-carboxyvinyl)-3-phosphoshikimate + phosphate. It participates in metabolic intermediate biosynthesis; chorismate biosynthesis; chorismate from D-erythrose 4-phosphate and phosphoenolpyruvate: step 6/7. Its function is as follows. Catalyzes the transfer of the enolpyruvyl moiety of phosphoenolpyruvate (PEP) to the 5-hydroxyl of shikimate-3-phosphate (S3P) to produce enolpyruvyl shikimate-3-phosphate and inorganic phosphate. This is 3-phosphoshikimate 1-carboxyvinyltransferase 2 (EPSPS-2) from Nicotiana tabacum (Common tobacco).